The chain runs to 276 residues: Thymidylate synthase (276 aa).

Arg26 is a dUMP binding site. Position 56 (His56) interacts with (6R)-5,10-methylene-5,6,7,8-tetrahydrofolate. Residue 131-132 participates in dUMP binding; it reads RR. Cys151 functions as the Nucleophile in the catalytic mechanism. Residues 178-181, Asn189, and 219-221 contribute to the dUMP site; these read RSAD and HIY. Position 181 (Asp181) interacts with (6R)-5,10-methylene-5,6,7,8-tetrahydrofolate. Ala275 contributes to the (6R)-5,10-methylene-5,6,7,8-tetrahydrofolate binding site.

This sequence belongs to the thymidylate synthase family. Bacterial-type ThyA subfamily. As to quaternary structure, homodimer.

Its subcellular location is the cytoplasm. It carries out the reaction dUMP + (6R)-5,10-methylene-5,6,7,8-tetrahydrofolate = 7,8-dihydrofolate + dTMP. The protein operates within pyrimidine metabolism; dTTP biosynthesis. Its function is as follows. Catalyzes the reductive methylation of 2'-deoxyuridine-5'-monophosphate (dUMP) to 2'-deoxythymidine-5'-monophosphate (dTMP) while utilizing 5,10-methylenetetrahydrofolate (mTHF) as the methyl donor and reductant in the reaction, yielding dihydrofolate (DHF) as a by-product. This enzymatic reaction provides an intracellular de novo source of dTMP, an essential precursor for DNA biosynthesis. This chain is Thymidylate synthase, found in Polaromonas naphthalenivorans (strain CJ2).